Reading from the N-terminus, the 633-residue chain is Threonine--tRNA ligase (633 aa).

In terms of domain architecture, TGS spans 1–61 (MINITLPDGS…DHDASLRIIT (61 aa)). The interval 243-534 (DHRRIGKQQD…LIEHHAGQFP (292 aa)) is catalytic. Positions 334, 385, and 511 each coordinate Zn(2+).

It belongs to the class-II aminoacyl-tRNA synthetase family. In terms of assembly, homodimer. Zn(2+) is required as a cofactor.

The protein localises to the cytoplasm. The enzyme catalyses tRNA(Thr) + L-threonine + ATP = L-threonyl-tRNA(Thr) + AMP + diphosphate + H(+). Its function is as follows. Catalyzes the attachment of threonine to tRNA(Thr) in a two-step reaction: L-threonine is first activated by ATP to form Thr-AMP and then transferred to the acceptor end of tRNA(Thr). Also edits incorrectly charged L-seryl-tRNA(Thr). In Stenotrophomonas maltophilia (strain R551-3), this protein is Threonine--tRNA ligase.